The sequence spans 420 residues: Lactosylceramide alpha-2,3-sialyltransferase (420 aa).

A disordered region spans residues 1 to 39; that stretch reads MRKKAAGGAERRPLKPRTEAAAAAPAGRAMPSDHSRMKL. Over 1–67 the chain is Cytoplasmic; the sequence is MRKKAAGGAE…MRRPNLLLKD (67 aa). The segment covering 9–18 has biased composition (basic and acidic residues); the sequence is AERRPLKPRT. Residues 20–29 are compositionally biased toward low complexity; sequence AAAAAPAGRA. A helical transmembrane segment spans residues 68-88; that stretch reads ILKCTLLLFGVWILFYILKLN. Residues 89-420 lie on the Lumenal side of the membrane; that stretch reads HTTEECDMKR…DLSGGIHSEF (332 aa). A disulfide bond links Cys-197 and Cys-355. The N-linked (GlcNAc...) asparagine glycan is linked to Asn-238.

It belongs to the glycosyltransferase 29 family.

It localises to the golgi apparatus membrane. The catalysed reaction is a beta-D-Gal-(1-&gt;4)-beta-D-Glc-(1&lt;-&gt;1)-Cer(d18:1(4E)) + CMP-N-acetyl-beta-neuraminate = a ganglioside GM3 (d18:1(4E)) + CMP + H(+). It catalyses the reaction ganglioside GA2 (d18:1(4E)/18:0) + CMP-N-acetyl-beta-neuraminate = ganglioside GM2 (d18:1(4E)/18:0) + CMP + H(+). The enzyme catalyses a beta-D-Gal-(1&lt;-&gt;1')-ceramide + CMP-N-acetyl-beta-neuraminate = N-acetyl-alpha-neuraminosyl-(2-&gt;3)-beta-D-galactosyl-(1&lt;-&gt;1')-ceramide + CMP + H(+). It carries out the reaction ganglioside GA1 (d18:1(4E)/18:0) + CMP-N-acetyl-beta-neuraminate = ganglioside GM1 (d18:1(4E)/18:0) + CMP + H(+). Functionally, transfers the sialyl group (N-acetyl-alpha-neuraminyl or NeuAc) from CMP-NeuAc to the non-reducing terminal galactose (Gal) of glycosphingolipids forming gangliosides (important molecules involved in the regulation of multiple cellular processes, including cell proliferation and differentiation, apoptosis, embryogenesis, development, and oncogenesis). Mainly involved in the biosynthesis of ganglioside GM3 but can also use different glycolipids as substrate acceptors such as D-galactosylceramide (GalCer), asialo-GM2 (GA2) and asialo-GM1 (GA1), although less preferentially than beta-D-Gal-(1-&gt;4)-beta-D-Glc-(1&lt;-&gt;1)-Cer (LacCer). The chain is Lactosylceramide alpha-2,3-sialyltransferase (ST3GAL5) from Bos taurus (Bovine).